Reading from the N-terminus, the 243-residue chain is Voltage-gated monoatomic cation channel TMEM109 (243 aa).

Residues 1-33 form the signal peptide; that stretch reads MAGAHSTPLWSRHLLKAVLMVLVALFLVHSASA. The Lumenal portion of the chain corresponds to 34 to 83; it reads QSHREFASPGQQKKETSADILTQIGRSLKEMLDTWLGPETMHVISETLLQ. Residues 84–104 traverse the membrane as a helical segment; sequence VMWAISSAISVACFALSGIAA. The Cytoplasmic segment spans residues 105 to 135; sequence QLLSALGLDGEQLTQGLKLSPSQVQTLLLWG. A helical transmembrane segment spans residues 136–156; sequence AAALVIYWLLSLLLGLVLALL. At 157–185 the chain is on the lumenal side; it reads GRILGGLKLVLFVAGFVALVRSVPDPSTR. A helical membrane pass occupies residues 186–205; sequence ALMLLALLTLFALLSRLTGS. Topologically, residues 206 to 243 are cytoplasmic; the sequence is RSSGSHLEAKVRGLERQIEELRGRQRRAAKMPRSMEEE.

Homooligomer. Interacts with CRYAB; in the cellular response to DNA damage.

It localises to the nucleus outer membrane. It is found in the endoplasmic reticulum membrane. The protein resides in the sarcoplasmic reticulum membrane. It catalyses the reaction K(+)(in) = K(+)(out). The enzyme catalyses Ca(2+)(in) = Ca(2+)(out). Its function is as follows. Functions as a voltage-gated monoatomic cation channel permeable to both potassium and calcium. Plays a role in the cellular response to DNA damage. The protein is Voltage-gated monoatomic cation channel TMEM109 of Mus musculus (Mouse).